Consider the following 143-residue polypeptide: Large ribosomal subunit protein uL13 (143 aa).

It belongs to the universal ribosomal protein uL13 family. In terms of assembly, part of the 50S ribosomal subunit.

Its function is as follows. This protein is one of the early assembly proteins of the 50S ribosomal subunit, although it is not seen to bind rRNA by itself. It is important during the early stages of 50S assembly. The chain is Large ribosomal subunit protein uL13 from Methylacidiphilum infernorum (isolate V4) (Methylokorus infernorum (strain V4)).